A 728-amino-acid chain; its full sequence is Phomopsene synthase (728 aa).

Residues 1-327 (MEYRYSYVID…PRYHSDQSLD (327 aa)) are terpene cyclase. The Mg(2+) site is built by D94 and D98. Residues D94, D98, 181–184 (RIVD), N226, 230–234 (SWEKE), and 319–320 (RY) contribute to the substrate site. The short motif at 94 to 98 (DDLVD) is the DDXXD 1 element. The short motif at 226–234 (NDVQSWEKE) is the NSE/DTE element. Positions 328 to 728 (EMMVARMKYG…FRFLLSLLKV (401 aa)) are prenyltransferase. The span at 352–363 (ENRGTKRTHQDD) shows a compositional bias: basic and acidic residues. The interval 352–379 (ENRGTKRTHQDDTEGVQSVKRFNGASTK) is disordered. A run of 3 repeats spans residues 381–386 (GINGTN), 387–392 (GINGLN), and 393–398 (GINGSN). The tract at residues 381–398 (GINGTNGINGLNGINGSN) is 3 X 6 AA approximate tandem repeats. 3 residues coordinate isopentenyl diphosphate: K447, R450, and H479. Residues D486 and D490 each coordinate Mg(2+). A DDXXD 2 motif is present at residues 486 to 490 (DDVQD). Position 495 (R495) interacts with dimethylallyl diphosphate. R496 is a binding site for isopentenyl diphosphate. Dimethylallyl diphosphate contacts are provided by K574, T575, Q610, N617, K627, and K637.

In the N-terminal section; belongs to the terpene synthase family. The protein in the C-terminal section; belongs to the FPP/GGPP synthase family. As to quaternary structure, hexamer. It depends on Mg(2+) as a cofactor.

It catalyses the reaction isopentenyl diphosphate + (2E,6E)-farnesyl diphosphate = (2E,6E,10E)-geranylgeranyl diphosphate + diphosphate. The protein operates within secondary metabolite biosynthesis; terpenoid biosynthesis. In terms of biological role, bifunctional terpene synthase; part of the gene cluster that mediates the biosynthesis of the diterpene methyl phomopsenonate. At first, the universal precursor of diterpene, geranylgeranyl diphosphate (GGPP) is provided and is cyclized by the unusual bifunctional terpene synthase PaPS to give phomopsene. The C-terminal prenyltransferase domain of PaPS catalyzes formation of GGPP, whereas the N-terminal terpene cyclase domain catalyzes the cyclization of GGPP to phomopsene. Since the oxidation of a methylgroup to a carboxyl group is frequently catalyzed by a cytochrome P450 monooxygenase, the C-16 methyl group would be oxidized by the cluster-specific cytochrome P450 monooxygenase ORF3. Subsequently, oxidation of the allylic position and methylation of the carboxyl group may give methyl phomopsenonate. Although further study is necessary to identify genes such as a monooxygenase and a methyltransferase, the predicted functions of genes on the cluster are correlated with the structure of methyl phomopsenonate. This Phomopsis amygdali (Fusicoccum amygdali) protein is Phomopsene synthase.